Consider the following 116-residue polypeptide: Flagellar transcriptional regulator FlhD (116 aa).

The protein belongs to the FlhD family. Homodimer; disulfide-linked. Forms a heterohexamer composed of two FlhC and four FlhD subunits. Each FlhC binds a FlhD dimer, forming a heterotrimer, and a hexamer assembles by dimerization of two heterotrimers.

Its subcellular location is the cytoplasm. In terms of biological role, functions in complex with FlhC as a master transcriptional regulator that regulates transcription of several flagellar and non-flagellar operons by binding to their promoter region. Activates expression of class 2 flagellar genes, including fliA, which is a flagellum-specific sigma factor that turns on the class 3 genes. Also regulates genes whose products function in a variety of physiological pathways. The protein is Flagellar transcriptional regulator FlhD of Xenorhabdus nematophila (Achromobacter nematophilus).